A 358-amino-acid polypeptide reads, in one-letter code: Tetraacyldisaccharide 4'-kinase (358 aa).

71–78 contributes to the ATP binding site; sequence IAGGAGKT.

The protein belongs to the LpxK family.

It carries out the reaction a lipid A disaccharide + ATP = a lipid IVA + ADP + H(+). It functions in the pathway glycolipid biosynthesis; lipid IV(A) biosynthesis; lipid IV(A) from (3R)-3-hydroxytetradecanoyl-[acyl-carrier-protein] and UDP-N-acetyl-alpha-D-glucosamine: step 6/6. Functionally, transfers the gamma-phosphate of ATP to the 4'-position of a tetraacyldisaccharide 1-phosphate intermediate (termed DS-1-P) to form tetraacyldisaccharide 1,4'-bis-phosphate (lipid IVA). The protein is Tetraacyldisaccharide 4'-kinase of Methylibium petroleiphilum (strain ATCC BAA-1232 / LMG 22953 / PM1).